Here is a 589-residue protein sequence, read N- to C-terminus: MPSSSSAAVLVFLLLVSLLTPTFASDSDHKYQAEEQVTLWVNKVGPYNNPQETYNYYSLPFCRPSGNNVHKWGGLGEVLGGNELIDSEIAIKFMKNVERSVICPLELDEAKVKHFKDAIESSYWFEFFMDDLPLWGFVGELHPDKNSENGKHVLYTHKNIVVKYNKDQIIHVNLTQDNPRPLEAGKKMDLTYSVQWIPTNVTFARRFDVYLDYPFFEHQIHWFSIFNSFMMVIFLTGLVSMILMRTLRNDYAKYAREDDDLESLERDVSEESGWKLVHGDVFRPASSLVLLSAVVGTGAQLALLVLLVILMAIVGTLYVGRGAIVTTFIVCYALTSFVSGYVSGGMYSRSGGKHWIKCMVLTASLFPFLCFGIGFLLNTIAIFYGSLAAIPFGTMVVVFVIWGFISFPLALLGTVVGRNWSGAPNNPCRVKTIPRPIPEKKWYLTPSVVSLMGGLLPFGSIFIEMYFVFTSFWNYKVYYVYGFMLLVFVILVIVTVCVTIVGTYFLLNAENYHWQWTSFFSAASTAVYVYLYSIYYYYVKTKMSGFFQTSFYFGYTMMFCLGLGILCGAVGYLGSNLFVRRIYRNIKCD.

The N-terminal stretch at Met1–Ala24 is a signal peptide. Residues Ser25–Trp222 lie on the Lumenal side of the membrane. The helical transmembrane segment at Phe223–Leu243 threads the bilayer. Residues Met244–Ala293 lie on the Cytoplasmic side of the membrane. A helical membrane pass occupies residues Val294–Val314. At Gly315–Arg321 the chain is on the lumenal side. Residues Gly322–Val342 traverse the membrane as a helical segment. Over Ser343–Ser364 the chain is Cytoplasmic. A helical membrane pass occupies residues Leu365 to Gly385. Over Ser386–Met395 the chain is Lumenal. A helical transmembrane segment spans residues Val396 to Val416. Over Gly417–Val448 the chain is Cytoplasmic. Residues Val449–Phe469 form a helical membrane-spanning segment. Residues Thr470–Tyr481 are Lumenal-facing. A helical transmembrane segment spans residues Gly482–Gly502. Topologically, residues Thr503–Ser518 are cytoplasmic. Residues Phe519–Val539 form a helical membrane-spanning segment. At Lys540–Ser550 the chain is on the lumenal side. Residues Phe551–Gly571 traverse the membrane as a helical segment. Residues Tyr572–Asp589 lie on the Cytoplasmic side of the membrane. Positions Phe578–Tyr583 match the Endoplasmic reticulum export signal motif. The Golgi retention signal motif lies at Lys587–Asp589.

It belongs to the nonaspanin (TM9SF) (TC 9.A.2) family. As to expression, ubiquitous.

The protein resides in the endosome membrane. It localises to the golgi apparatus membrane. This is Transmembrane 9 superfamily member 1 from Arabidopsis thaliana (Mouse-ear cress).